The sequence spans 193 residues: Acyl carrier protein phosphodiesterase (193 aa).

This sequence belongs to the AcpH family.

It catalyses the reaction holo-[ACP] + H2O = apo-[ACP] + (R)-4'-phosphopantetheine + H(+). Converts holo-ACP to apo-ACP by hydrolytic cleavage of the phosphopantetheine prosthetic group from ACP. The sequence is that of Acyl carrier protein phosphodiesterase from Escherichia coli O6:K15:H31 (strain 536 / UPEC).